The sequence spans 608 residues: FAD-binding monooxygenase ktnD (608 aa).

The N-linked (GlcNAc...) asparagine glycan is linked to Asn4. Residues 17–37 (ATVVIIGAGVSGMCMAIDLLH) traverse the membrane as a helical segment. FAD contacts are provided by residues 56–59 (TWAN), 68–69 (DV), and Tyr74. NADP(+) is bound at residue 66-68 (ASD). N-linked (GlcNAc...) asparagine glycosylation occurs at Asn114. NADP(+) is bound by residues 201-207 (NGASAIQ) and 224-225 (RS). An N-linked (GlcNAc...) asparagine glycan is attached at Asn325. The chain crosses the membrane as a helical span at residues 535–555 (ALVSNVTLFLGVALAAGGVYW).

The protein belongs to the FAD-binding monooxygenase family. The cofactor is FAD.

Its subcellular location is the membrane. Non-reducing polyketide synthase; part of the gene cluster that mediates the biosynthesis of the bicoumarin kotanin. The non-reducing polyketide synthase ktnS first catalyzes the formation of the pentaketidic 4,7-dihydroxy-5-methylcoumarin from acetyl coenzyme A and 4 malonyl coenzyme A molecules. Further O-methylation by ktnB leads to the formation of 7-demethylsiderin. Then, an oxidative phenol coupling catalyzed by the cytochrome P450 monooxygenase ktnC forms the 8,8'-dimer P-orlandin via dimerization the monomeric precursor, 7-demethylsiderin. P-orlandin is subsequently O-methylated in a stepwise fashion to demethylkotanin and kotanin. The function of ktnD within the pathway has not been determined yet. The polypeptide is FAD-binding monooxygenase ktnD (Aspergillus niger (strain ATCC MYA-4892 / CBS 513.88 / FGSC A1513)).